We begin with the raw amino-acid sequence, 437 residues long: 5-hydroxytryptamine receptor 3B (437 aa).

An N-terminal signal peptide occupies residues 1-21 (MILLWSCLLVAVVGILGTATP). The Extracellular portion of the chain corresponds to 22 to 238 (QPGNSSLHRL…VVIRRCPLAY (217 aa)). 3 N-linked (GlcNAc...) asparagine glycosylation sites follow: asparagine 25, asparagine 92, and asparagine 134. A disulfide bond links cysteine 151 and cysteine 165. A helical membrane pass occupies residues 239-259 (VVSLLIPSIFLMLVDLGSFYL). Topologically, residues 260–264 (PPNCR) are cytoplasmic. The helical transmembrane segment at 265 to 282 (ARIVFKTNVLVGYTVFRV) threads the bilayer. N-linked (GlcNAc...) asparagine glycosylation occurs at asparagine 283. Topologically, residues 283-292 (NMSDEVPRSA) are extracellular. A helical membrane pass occupies residues 293 to 313 (GCTPLIGVFFTVCMALLVLSL). Residues 314–410 (SKSILLIKFL…WLAILYRFDQ (97 aa)) are Cytoplasmic-facing. The tract at residues 377-409 (FWFQFRSINNSLRTRDQIHQKEVEWLAILYRFD) is HA-stretch; determines single-channel conductance in 5-HT3 receptors. The chain crosses the membrane as a helical span at residues 411 to 431 (LLFRIYLAVLGLYTVTLCSLW). At 432–437 (ALWSRM) the chain is on the extracellular side.

Belongs to the ligand-gated ion channel (TC 1.A.9) family. 5-hydroxytryptamine receptor (TC 1.A.9.2) subfamily. HTR3B sub-subfamily. Forms homopentameric as well as heteropentameric serotonin-activated cation-selective channel complexes with HTR3A. The homomeric complex is not functional. Heteropentameric complexes display properties which resemble that of neuronal serotonin-activated channels in vivo. N-glycosylation is required for membrane localization.

Its subcellular location is the postsynaptic cell membrane. It localises to the cell membrane. The enzyme catalyses Na(+)(in) = Na(+)(out). It catalyses the reaction K(+)(in) = K(+)(out). The catalysed reaction is Ca(2+)(in) = Ca(2+)(out). Its function is as follows. Forms serotonin (5-hydroxytryptamine/5-HT3)-activated cation-selective channel complexes, which when activated cause fast, depolarizing responses in neurons. The polypeptide is 5-hydroxytryptamine receptor 3B (Mus musculus (Mouse)).